We begin with the raw amino-acid sequence, 155 residues long: SsrA-binding protein (155 aa).

The segment covering 135 to 147 (TIKRRDQERDIKK) has biased composition (basic and acidic residues). Residues 135–155 (TIKRRDQERDIKKQMKHYNAR) form a disordered region.

The protein belongs to the SmpB family.

It is found in the cytoplasm. Required for rescue of stalled ribosomes mediated by trans-translation. Binds to transfer-messenger RNA (tmRNA), required for stable association of tmRNA with ribosomes. tmRNA and SmpB together mimic tRNA shape, replacing the anticodon stem-loop with SmpB. tmRNA is encoded by the ssrA gene; the 2 termini fold to resemble tRNA(Ala) and it encodes a 'tag peptide', a short internal open reading frame. During trans-translation Ala-aminoacylated tmRNA acts like a tRNA, entering the A-site of stalled ribosomes, displacing the stalled mRNA. The ribosome then switches to translate the ORF on the tmRNA; the nascent peptide is terminated with the 'tag peptide' encoded by the tmRNA and targeted for degradation. The ribosome is freed to recommence translation, which seems to be the essential function of trans-translation. This chain is SsrA-binding protein, found in Streptococcus pyogenes serotype M12 (strain MGAS2096).